Here is a 153-residue protein sequence, read N- to C-terminus: Protein eva-1 homolog A (153 aa).

Residues 37-57 (ALYFVCGVCLGLVLTLIALVV) form a helical membrane-spanning segment. Positions 66–97 (KTQQAPKKTGKTVENTSDTSDSDSDWDNTSDL) are disordered.

The protein belongs to the EVA1 family.

The protein resides in the endoplasmic reticulum membrane. It localises to the lysosome membrane. Functionally, acts as a regulator of programmed cell death, mediating both autophagy and apoptosis. In Danio rerio (Zebrafish), this protein is Protein eva-1 homolog A (Eva1a).